Reading from the N-terminus, the 500-residue chain is Glycerol kinase (500 aa).

Residue Thr-15 participates in ADP binding. Thr-15, Thr-16, and Ser-17 together coordinate ATP. Thr-15 contacts sn-glycerol 3-phosphate. ADP is bound at residue Arg-19. Sn-glycerol 3-phosphate contacts are provided by Arg-85, Glu-86, Tyr-137, and Asp-245. Arg-85, Glu-86, Tyr-137, Asp-245, and Gln-246 together coordinate glycerol. ADP is bound by residues Thr-267 and Gly-310. Residues Thr-267, Gly-310, Gln-314, and Gly-411 each contribute to the ATP site. ADP contacts are provided by Gly-411 and Asn-415.

Belongs to the FGGY kinase family.

The enzyme catalyses glycerol + ATP = sn-glycerol 3-phosphate + ADP + H(+). It functions in the pathway polyol metabolism; glycerol degradation via glycerol kinase pathway; sn-glycerol 3-phosphate from glycerol: step 1/1. Its activity is regulated as follows. Inhibited by fructose 1,6-bisphosphate (FBP). Key enzyme in the regulation of glycerol uptake and metabolism. Catalyzes the phosphorylation of glycerol to yield sn-glycerol 3-phosphate. The chain is Glycerol kinase from Aeromonas hydrophila subsp. hydrophila (strain ATCC 7966 / DSM 30187 / BCRC 13018 / CCUG 14551 / JCM 1027 / KCTC 2358 / NCIMB 9240 / NCTC 8049).